The following is a 191-amino-acid chain: Signal peptidase IB (191 aa).

Residues 1–7 (MKKELLE) are Cytoplasmic-facing. The chain crosses the membrane as a helical span at residues 8 to 28 (WIISIAVAFVILFIVGKFIVT). Residues 29-191 (PYTIKGESMD…HNFNPENTKN (163 aa)) are Extracellular-facing. Active-site residues include Ser-36 and Lys-77.

It belongs to the peptidase S26 family.

Its subcellular location is the cell membrane. It carries out the reaction Cleavage of hydrophobic, N-terminal signal or leader sequences from secreted and periplasmic proteins.. Essential for cell viability. The polypeptide is Signal peptidase IB (spsB) (Staphylococcus aureus (strain Mu50 / ATCC 700699)).